We begin with the raw amino-acid sequence, 462 residues long: Metacaspase-1 (462 aa).

Over residues 1–21 (MSYYPPPSGYPGGPPAYPPPQ) the composition is skewed to pro residues. The tract at residues 1 to 150 (MSYYPPPSGY…PPPPSGSVAF (150 aa)) is disordered. Residues 22–33 (QQQQQQQQYPSY) show a composition bias toward low complexity. Composition is skewed to pro residues over residues 49 to 69 (PSYPPPGQYGHPPQPGYPPHS) and 77 to 102 (SPQPPYGHPPPQHPPHQPPHRPPPSP). Catalysis depends on residues H253 and C309.

Belongs to the peptidase C14B family.

In terms of biological role, involved in cell death (apoptosis). This chain is Metacaspase-1 (MCA1), found in Coccidioides immitis (strain RS) (Valley fever fungus).